The sequence spans 247 residues: DNA polymerase sliding clamp (247 aa).

This sequence belongs to the PCNA family. Homotrimer. The subunits circularize to form a toroid; DNA passes through its center. Replication factor C (RFC) is required to load the toroid on the DNA.

Its function is as follows. Sliding clamp subunit that acts as a moving platform for DNA processing. Responsible for tethering the catalytic subunit of DNA polymerase and other proteins to DNA during high-speed replication. The protein is DNA polymerase sliding clamp of Thermofilum pendens (strain DSM 2475 / Hrk 5).